The primary structure comprises 242 residues: Segregation and condensation protein A (242 aa).

It belongs to the ScpA family. In terms of assembly, component of a cohesin-like complex composed of ScpA, ScpB and the Smc homodimer, in which ScpA and ScpB bind to the head domain of Smc. The presence of the three proteins is required for the association of the complex with DNA.

It localises to the cytoplasm. In terms of biological role, participates in chromosomal partition during cell division. May act via the formation of a condensin-like complex containing Smc and ScpB that pull DNA away from mid-cell into both cell halves. The polypeptide is Segregation and condensation protein A (Lactococcus lactis subsp. cremoris (strain SK11)).